Consider the following 216-residue polypeptide: Histone doublet H4-H3 (216 aa).

Positions 1-12 (MSKAGKKVKAQQ) are enriched in basic residues. The tract at residues 1-23 (MSKAGKKVKAQQHGHLADHVSVG) is disordered.

It localises to the host nucleus. The protein localises to the host cytoplasm. The protein resides in the virion. In terms of biological role, histone-like protein that is recruited to viral factories during viral replication and participates in viral DNA packaging and virion production probably by forming unstable nucleosome-like particles. May compact the viral DNA. This is Histone doublet H4-H3 from Melbournevirus (MelV).